The chain runs to 215 residues: Large ribosomal subunit protein uL3 (215 aa).

At Q156 the chain carries N5-methylglutamine.

It belongs to the universal ribosomal protein uL3 family. In terms of assembly, part of the 50S ribosomal subunit. Forms a cluster with proteins L14 and L19. In terms of processing, methylated by PrmB.

Its function is as follows. One of the primary rRNA binding proteins, it binds directly near the 3'-end of the 23S rRNA, where it nucleates assembly of the 50S subunit. This is Large ribosomal subunit protein uL3 from Xylella fastidiosa (strain M12).